We begin with the raw amino-acid sequence, 590 residues long: Aspartate--tRNA(Asp/Asn) ligase (590 aa).

L-aspartate is bound at residue glutamate 169. Residues 193 to 196 (QLFK) form an aspartate region. Residue arginine 215 participates in L-aspartate binding. Residues 215-217 (RDE) and glutamine 224 contribute to the ATP site. Histidine 447 is an L-aspartate binding site. Residue glutamate 479 coordinates ATP. Arginine 486 contributes to the L-aspartate binding site. 531–534 (GWDR) contributes to the ATP binding site. The tract at residues 556-590 (GGFDPLTAAPAPITPEQRKEAGVDARPQQDLPPQS) is disordered.

It belongs to the class-II aminoacyl-tRNA synthetase family. Type 1 subfamily. Homodimer.

Its subcellular location is the cytoplasm. It catalyses the reaction tRNA(Asx) + L-aspartate + ATP = L-aspartyl-tRNA(Asx) + AMP + diphosphate. Its function is as follows. Aspartyl-tRNA synthetase with relaxed tRNA specificity since it is able to aspartylate not only its cognate tRNA(Asp) but also tRNA(Asn). Reaction proceeds in two steps: L-aspartate is first activated by ATP to form Asp-AMP and then transferred to the acceptor end of tRNA(Asp/Asn). This is Aspartate--tRNA(Asp/Asn) ligase from Nocardioides sp. (strain ATCC BAA-499 / JS614).